The primary structure comprises 218 residues: Fibroblast growth factor 15 (218 aa).

A signal peptide spans 1-25 (MARKWNGRAVARALVLATLWLAVSG).

The protein belongs to the heparin-binding growth factors family. As to quaternary structure, interacts with MALRD1. In terms of tissue distribution, expressed in the developing brain.

The protein localises to the secreted. In terms of biological role, involved in the suppression of bile acid biosynthesis through down-regulation of CYP7A1 expression. This Mus musculus (Mouse) protein is Fibroblast growth factor 15 (Fgf15).